The following is a 312-amino-acid chain: Ribonuclease HIII (312 aa).

Residues 95 to 311 (FNCIGSDEAG…REKAQKILKP (217 aa)) form the RNase H type-2 domain. Residues Asp101, Glu102, and Asp206 each coordinate a divalent metal cation.

It belongs to the RNase HII family. RnhC subfamily. Requires Mn(2+) as cofactor. Mg(2+) is required as a cofactor.

Its subcellular location is the cytoplasm. It catalyses the reaction Endonucleolytic cleavage to 5'-phosphomonoester.. Functionally, endonuclease that specifically degrades the RNA of RNA-DNA hybrids. This is Ribonuclease HIII from Staphylococcus aureus (strain MW2).